Reading from the N-terminus, the 341-residue chain is UDP-3-O-acylglucosamine N-acyltransferase (341 aa).

Residue His241 is the Proton acceptor of the active site.

The protein belongs to the transferase hexapeptide repeat family. LpxD subfamily. In terms of assembly, homotrimer.

It catalyses the reaction a UDP-3-O-[(3R)-3-hydroxyacyl]-alpha-D-glucosamine + a (3R)-hydroxyacyl-[ACP] = a UDP-2-N,3-O-bis[(3R)-3-hydroxyacyl]-alpha-D-glucosamine + holo-[ACP] + H(+). Its pathway is bacterial outer membrane biogenesis; LPS lipid A biosynthesis. Functionally, catalyzes the N-acylation of UDP-3-O-acylglucosamine using 3-hydroxyacyl-ACP as the acyl donor. Is involved in the biosynthesis of lipid A, a phosphorylated glycolipid that anchors the lipopolysaccharide to the outer membrane of the cell. The sequence is that of UDP-3-O-acylglucosamine N-acyltransferase from Haemophilus ducreyi (strain 35000HP / ATCC 700724).